A 614-amino-acid chain; its full sequence is UvrABC system protein C (614 aa).

Positions 26-104 (NLPGVYKMLG…IKEHRPPYNV (79 aa)) constitute a GIY-YIG domain. The region spanning 215–250 (SDIHTTLIEKMEHSAEALDFEKAAFYRDQLSMLREV) is the UVR domain.

The protein belongs to the UvrC family. As to quaternary structure, interacts with UvrB in an incision complex.

Its subcellular location is the cytoplasm. The UvrABC repair system catalyzes the recognition and processing of DNA lesions. UvrC both incises the 5' and 3' sides of the lesion. The N-terminal half is responsible for the 3' incision and the C-terminal half is responsible for the 5' incision. This is UvrABC system protein C from Psychrobacter sp. (strain PRwf-1).